Reading from the N-terminus, the 394-residue chain is GDSL esterase/lipase At1g31550 (394 aa).

Residues 1–27 form the signal peptide; the sequence is MASLDSHVLMKLGSLFLSTLFVSIVSS. The Nucleophile role is filled by serine 43. 3 N-linked (GlcNAc...) asparagine glycosylation sites follow: asparagine 138, asparagine 290, and asparagine 322. Residues aspartate 345 and histidine 348 contribute to the active site.

The protein belongs to the 'GDSL' lipolytic enzyme family.

Its subcellular location is the secreted. The sequence is that of GDSL esterase/lipase At1g31550 from Arabidopsis thaliana (Mouse-ear cress).